The sequence spans 119 residues: Large ribosomal subunit protein bL20 (119 aa).

It belongs to the bacterial ribosomal protein bL20 family.

Binds directly to 23S ribosomal RNA and is necessary for the in vitro assembly process of the 50S ribosomal subunit. It is not involved in the protein synthesizing functions of that subunit. This chain is Large ribosomal subunit protein bL20, found in Nitrosomonas eutropha (strain DSM 101675 / C91 / Nm57).